A 251-amino-acid polypeptide reads, in one-letter code: Ditrans,polycis-undecaprenyl-diphosphate synthase ((2E,6E)-farnesyl-diphosphate specific) (251 aa).

Asp-19 is an active-site residue. Residue Asp-19 coordinates Mg(2+). Residues 20–23, Trp-24, His-36, and 64–66 contribute to the substrate site; these read GNNR and SSE. Residue Asn-67 is the Proton acceptor of the active site. Substrate-binding positions include Trp-68, Arg-70, Arg-187, and 193–195; that span reads RIS. Glu-206 is a binding site for Mg(2+).

Belongs to the UPP synthase family. As to quaternary structure, homodimer. The cofactor is Mg(2+).

The enzyme catalyses 8 isopentenyl diphosphate + (2E,6E)-farnesyl diphosphate = di-trans,octa-cis-undecaprenyl diphosphate + 8 diphosphate. Its function is as follows. Catalyzes the sequential condensation of isopentenyl diphosphate (IPP) with (2E,6E)-farnesyl diphosphate (E,E-FPP) to yield (2Z,6Z,10Z,14Z,18Z,22Z,26Z,30Z,34E,38E)-undecaprenyl diphosphate (di-trans,octa-cis-UPP). UPP is the precursor of glycosyl carrier lipid in the biosynthesis of bacterial cell wall polysaccharide components such as peptidoglycan and lipopolysaccharide. This chain is Ditrans,polycis-undecaprenyl-diphosphate synthase ((2E,6E)-farnesyl-diphosphate specific), found in Pseudomonas aeruginosa (strain ATCC 15692 / DSM 22644 / CIP 104116 / JCM 14847 / LMG 12228 / 1C / PRS 101 / PAO1).